The primary structure comprises 419 residues: Enolase (419 aa).

Glutamine 161 provides a ligand contact to (2R)-2-phosphoglycerate. The active-site Proton donor is glutamate 205. Mg(2+) contacts are provided by aspartate 240, glutamate 283, and aspartate 309. The (2R)-2-phosphoglycerate site is built by lysine 334, arginine 363, serine 364, and lysine 385. Residue lysine 334 is the Proton acceptor of the active site.

Belongs to the enolase family. Mg(2+) is required as a cofactor.

The protein localises to the cytoplasm. The protein resides in the secreted. It is found in the cell surface. It carries out the reaction (2R)-2-phosphoglycerate = phosphoenolpyruvate + H2O. It functions in the pathway carbohydrate degradation; glycolysis; pyruvate from D-glyceraldehyde 3-phosphate: step 4/5. Its function is as follows. Catalyzes the reversible conversion of 2-phosphoglycerate (2-PG) into phosphoenolpyruvate (PEP). It is essential for the degradation of carbohydrates via glycolysis. This chain is Enolase, found in Saccharolobus islandicus (strain L.S.2.15 / Lassen #1) (Sulfolobus islandicus).